Reading from the N-terminus, the 627-residue chain is Anti-CBASS protein Acb1 (627 aa).

Tyrosine 105 contacts 3',3'-cGAMP. Position 105 (tyrosine 105) interacts with 3',3'-cUAMP. Residues leucine 437–proline 474 form a disordered region. Residues histidine 508, threonine 510, histidine 584, and threonine 586 contribute to the active site. 3',3'-cGAMP contacts are provided by glutamate 614 and tryptophan 620. 3',3'-cUAMP contacts are provided by glutamate 614 and tryptophan 620.

This sequence belongs to the anti-CBASS protein Acb1 family.

It catalyses the reaction 3',3'-cUAMP + H2O = U[3'-5']pAp[3'] + H(+). The enzyme catalyses 3',3',3'-c-tri-AMP + H2O = A[3'-5']pA[3'-5']pAp[3'] + H(+). The catalysed reaction is 3',3',3'-cAAG + H2O = G[3'-5']pA[3'-5']pAp[3'] + H(+). It carries out the reaction 3',3',3'-cAAG + H2O = A[3'-5']pG[3'-5']pAp[3'] + H(+). It catalyses the reaction 3',3'-cGAMP + H2O = G[3'-5']pAp[3'] + H(+). Its function is as follows. Counteracts or regulates the endogenous CBASS antiviral defense system. Phosphodiesterase that enables metal-independent hydrolysis of the host cyclic di- and trinucleotide CBASS signals such as 3'3'-cGAMP, 3'3'cUA, and 3'3'3'-cAAA. This chain is Anti-CBASS protein Acb1, found in Caulobacter sp. (strain RHG1).